The sequence spans 292 residues: Oxidative stress-responsive serine-rich protein 1 (292 aa).

A disordered region spans residues Ala-24–Lys-178. The span at Ser-65–Lys-83 shows a compositional bias: basic residues. Residues Thr-143 and Thr-233 each carry the phosphothreonine modification.

This is Oxidative stress-responsive serine-rich protein 1 (OSER1) from Homo sapiens (Human).